Reading from the N-terminus, the 86-residue chain is Kunitz-type conkunitzin-S1 (86 aa).

Positions 1–26 (MEGRRFAAVLILTICMLAPGTGTLLP) are cleaved as a signal peptide. Positions 33–83 (CDLPADSGSGTKAEKRIYYNSARKQCLRFDYTGQGGNENNFRRTYDCQRTC) constitute a BPTI/Kunitz inhibitor domain. Disulfide bonds link cysteine 33/cysteine 83 and cysteine 58/cysteine 79. At threonine 86 the chain carries Threonine amide.

It belongs to the venom Kunitz-type family. Post-translationally, contains 2 disulfide bonds instead of 3, as for all Kunitz domain proteins. A double Cys-mutant carrying an additional Cys bridge does not show difference in activity with the natural peptide. However, there are some differences in the kinetics of binding of both peptides to the channel. In terms of tissue distribution, expressed by the venom duct.

It is found in the secreted. Blocks specifically voltage-activated potassium channels (Kv) of the Shaker family (IC(50)=1.33 nM). In Conus striatus (Striated cone), this protein is Kunitz-type conkunitzin-S1.